The primary structure comprises 508 residues: Photosystem II CP47 reaction center protein (508 aa).

A run of 6 helical transmembrane segments spans residues 21–36, 101–115, 140–156, 203–218, 237–252, and 457–472; these read SVHI…WAGS, IVFS…IWHW, GIHL…FGAF, IAAG…FHLS, VLSS…AFVV, and TFAL…HGAR.

The protein belongs to the PsbB/PsbC family. PsbB subfamily. PSII is composed of 1 copy each of membrane proteins PsbA, PsbB, PsbC, PsbD, PsbE, PsbF, PsbH, PsbI, PsbJ, PsbK, PsbL, PsbM, PsbT, PsbX, PsbY, PsbZ, Psb30/Ycf12, at least 3 peripheral proteins of the oxygen-evolving complex and a large number of cofactors. It forms dimeric complexes. Binds multiple chlorophylls. PSII binds additional chlorophylls, carotenoids and specific lipids. serves as cofactor.

It is found in the plastid. The protein localises to the chloroplast thylakoid membrane. In terms of biological role, one of the components of the core complex of photosystem II (PSII). It binds chlorophyll and helps catalyze the primary light-induced photochemical processes of PSII. PSII is a light-driven water:plastoquinone oxidoreductase, using light energy to abstract electrons from H(2)O, generating O(2) and a proton gradient subsequently used for ATP formation. The chain is Photosystem II CP47 reaction center protein from Drimys granadensis.